Consider the following 215-residue polypeptide: ATP phosphoribosyltransferase (215 aa).

This sequence belongs to the ATP phosphoribosyltransferase family. Short subfamily. In terms of assembly, heteromultimer composed of HisG and HisZ subunits.

The protein resides in the cytoplasm. The enzyme catalyses 1-(5-phospho-beta-D-ribosyl)-ATP + diphosphate = 5-phospho-alpha-D-ribose 1-diphosphate + ATP. Its pathway is amino-acid biosynthesis; L-histidine biosynthesis; L-histidine from 5-phospho-alpha-D-ribose 1-diphosphate: step 1/9. In terms of biological role, catalyzes the condensation of ATP and 5-phosphoribose 1-diphosphate to form N'-(5'-phosphoribosyl)-ATP (PR-ATP). Has a crucial role in the pathway because the rate of histidine biosynthesis seems to be controlled primarily by regulation of HisG enzymatic activity. The protein is ATP phosphoribosyltransferase of Gloeothece citriformis (strain PCC 7424) (Cyanothece sp. (strain PCC 7424)).